Here is an 88-residue protein sequence, read N- to C-terminus: UPF0297 protein BPUM_2379 (88 aa).

It belongs to the UPF0297 family.

The sequence is that of UPF0297 protein BPUM_2379 from Bacillus pumilus (strain SAFR-032).